We begin with the raw amino-acid sequence, 135 residues long: MNILRLLLATLLVCLCLLTAYSHLAPEEKPRDDRNLRSNSSMNMLDLSSVSIVALNKKSKKISRKEAEKKRSSKKKASMKNVAQPRRPRPPPPAPCVATRDSCKPPAPACCDPCASCQCRFFRSSCSCRVLNPTC.

The N-terminal stretch at 1-22 (MNILRLLLATLLVCLCLLTAYS) is a signal peptide. Residue asparagine 39 is glycosylated (N-linked (GlcNAc...) asparagine). The tract at residues 56–101 (NKKSKKISRKEAEKKRSSKKKASMKNVAQPRRPRPPPPAPCVATRD) is disordered. 5 disulfides stabilise this stretch: cysteine 96-cysteine 111, cysteine 103-cysteine 117, cysteine 110-cysteine 128, cysteine 114-cysteine 135, and cysteine 119-cysteine 126. In terms of domain architecture, Agouti spans 96 to 135 (CVATRDSCKPPAPACCDPCASCQCRFFRSSCSCRVLNPTC).

It is found in the secreted. Functionally, involved in the regulation of melanogenesis. The binding of ASP to MC1R precludes alpha-MSH initiated signaling and thus blocks production of cAMP, leading to a down-regulation of eumelanogenesis (brown/black pigment) and thus increasing synthesis of pheomelanin (yellow/red pigment). This chain is Agouti-signaling protein (ASIP), found in Felis catus (Cat).